The following is a 243-amino-acid chain: Exosome complex component Rrp41 (243 aa).

It belongs to the RNase PH family. Rrp41 subfamily. Component of the archaeal exosome complex. Forms a hexameric ring-like arrangement composed of 3 Rrp41-Rrp42 heterodimers. The hexameric ring associates with a trimer of Rrp4 and/or Csl4 subunits.

The protein resides in the cytoplasm. In terms of biological role, catalytic component of the exosome, which is a complex involved in RNA degradation. Has 3'-&gt;5' exoribonuclease activity. Can also synthesize heteromeric RNA-tails. The chain is Exosome complex component Rrp41 from Sulfurisphaera tokodaii (strain DSM 16993 / JCM 10545 / NBRC 100140 / 7) (Sulfolobus tokodaii).